The primary structure comprises 197 residues: Ycf20-like protein (197 aa).

3 consecutive transmembrane segments (helical) span residues 113–133 (MKIF…TILG), 138–158 (WDVL…MLMY), and 173–193 (FVVF…VDAF).

This sequence belongs to the ycf20 family.

The protein resides in the membrane. This is Ycf20-like protein from Arabidopsis thaliana (Mouse-ear cress).